Here is a 457-residue protein sequence, read N- to C-terminus: Siroheme synthase (457 aa).

The precorrin-2 dehydrogenase /sirohydrochlorin ferrochelatase stretch occupies residues 1-204; the sequence is MDHLPIFCQL…ADEKAVNATT (204 aa). NAD(+) contacts are provided by residues 22–23 and 43–44; these read DV and LT. A Phosphoserine modification is found at Ser128. Positions 216–457 are uroporphyrinogen-III C-methyltransferase; that stretch reads GEVVLVGAGP…RDKLNWFSNY (242 aa). Pro225 provides a ligand contact to S-adenosyl-L-methionine. Residue Asp248 is the Proton acceptor of the active site. Lys270 (proton donor) is an active-site residue. S-adenosyl-L-methionine is bound by residues 301-303, Ile306, 331-332, Met382, and Gly411; these read GGD and TA.

In the N-terminal section; belongs to the precorrin-2 dehydrogenase / sirohydrochlorin ferrochelatase family. This sequence in the C-terminal section; belongs to the precorrin methyltransferase family.

The enzyme catalyses uroporphyrinogen III + 2 S-adenosyl-L-methionine = precorrin-2 + 2 S-adenosyl-L-homocysteine + H(+). It catalyses the reaction precorrin-2 + NAD(+) = sirohydrochlorin + NADH + 2 H(+). The catalysed reaction is siroheme + 2 H(+) = sirohydrochlorin + Fe(2+). It participates in cofactor biosynthesis; adenosylcobalamin biosynthesis; precorrin-2 from uroporphyrinogen III: step 1/1. Its pathway is cofactor biosynthesis; adenosylcobalamin biosynthesis; sirohydrochlorin from precorrin-2: step 1/1. It functions in the pathway porphyrin-containing compound metabolism; siroheme biosynthesis; precorrin-2 from uroporphyrinogen III: step 1/1. The protein operates within porphyrin-containing compound metabolism; siroheme biosynthesis; siroheme from sirohydrochlorin: step 1/1. It participates in porphyrin-containing compound metabolism; siroheme biosynthesis; sirohydrochlorin from precorrin-2: step 1/1. Functionally, multifunctional enzyme that catalyzes the SAM-dependent methylations of uroporphyrinogen III at position C-2 and C-7 to form precorrin-2 via precorrin-1. Then it catalyzes the NAD-dependent ring dehydrogenation of precorrin-2 to yield sirohydrochlorin. Finally, it catalyzes the ferrochelation of sirohydrochlorin to yield siroheme. The polypeptide is Siroheme synthase (Salmonella heidelberg (strain SL476)).